A 211-amino-acid chain; its full sequence is Large ribosomal subunit protein uL3 (211 aa).

Glutamine 150 is subject to N5-methylglutamine.

The protein belongs to the universal ribosomal protein uL3 family. In terms of assembly, part of the 50S ribosomal subunit. Forms a cluster with proteins L14 and L19. In terms of processing, methylated by PrmB.

One of the primary rRNA binding proteins, it binds directly near the 3'-end of the 23S rRNA, where it nucleates assembly of the 50S subunit. The chain is Large ribosomal subunit protein uL3 from Pseudomonas syringae pv. tomato (strain ATCC BAA-871 / DC3000).